Reading from the N-terminus, the 279-residue chain is Putative pyruvate, phosphate dikinase regulatory protein (279 aa).

153–160 (GVSRTSKT) contributes to the ADP binding site.

The protein belongs to the pyruvate, phosphate/water dikinase regulatory protein family. PDRP subfamily.

It catalyses the reaction N(tele)-phospho-L-histidyl/L-threonyl-[pyruvate, phosphate dikinase] + ADP = N(tele)-phospho-L-histidyl/O-phospho-L-threonyl-[pyruvate, phosphate dikinase] + AMP + H(+). It carries out the reaction N(tele)-phospho-L-histidyl/O-phospho-L-threonyl-[pyruvate, phosphate dikinase] + phosphate + H(+) = N(tele)-phospho-L-histidyl/L-threonyl-[pyruvate, phosphate dikinase] + diphosphate. Functionally, bifunctional serine/threonine kinase and phosphorylase involved in the regulation of the pyruvate, phosphate dikinase (PPDK) by catalyzing its phosphorylation/dephosphorylation. The polypeptide is Putative pyruvate, phosphate dikinase regulatory protein (Bradyrhizobium sp. (strain ORS 278)).